The sequence spans 371 residues: MSESNELRKRQAEFTKELHGNNVTKSGFSALVSKNKSAQTEAVAKYLKHWDGKTDADAERRRLEDYNESTHSYYNVVTDFYEYGWGSSFHFSRFFKGESFSASVARHEHYLAYKAGIKENDLILDVGCGVGGPARTISRFTGCNIIGLNNNDYQIQKANYYAKRDHLDSKLSFVKGDFMKMEFDENTFDSVYAIEATCHAPTFEGVYGEIYKVLKPGGTFAVYEWVMTDKYDETNPEHRKIAYEIELGDGIPKMYSVDAARDALSKVGFEILEENDLADNDDEIPWYAPLTGEWKYVNSVADLATFFRTSRLGRAFTTSMVTVFEKLGLAPKGSVSVTNALEEAAVGLVAGGEKKLFTPMMLFVAKKPEQK.

This sequence belongs to the class I-like SAM-binding methyltransferase superfamily. Erg6/SMT family.

It carries out the reaction zymosterol + S-adenosyl-L-methionine = fecosterol + S-adenosyl-L-homocysteine + H(+). The protein operates within steroid metabolism; ergosterol biosynthesis; ergosterol from zymosterol: step 1/5. Catalyzes the methyl transfer from S-adenosyl-methionine to the C-24 of zymosterol to form fecosterol. This chain is Sterol 24-C-methyltransferase (ERG6), found in Kluyveromyces lactis (strain ATCC 8585 / CBS 2359 / DSM 70799 / NBRC 1267 / NRRL Y-1140 / WM37) (Yeast).